Reading from the N-terminus, the 697-residue chain is Polyribonucleotide nucleotidyltransferase (697 aa).

Mg(2+) contacts are provided by Asp-488 and Asp-494. In terms of domain architecture, KH spans 555–614 (PTFEVITINPDKIRDVIGKGGATIRQITEETKAAIDIEDNGTVRVFGETKAAARAAIAKI). Residues 624-692 (GKIYDGKVIR…NRGRIKLSMK (69 aa)) enclose the S1 motif domain.

Belongs to the polyribonucleotide nucleotidyltransferase family. Component of the RNA degradosome, which is a multiprotein complex involved in RNA processing and mRNA degradation. It depends on Mg(2+) as a cofactor.

Its subcellular location is the cytoplasm. It catalyses the reaction RNA(n+1) + phosphate = RNA(n) + a ribonucleoside 5'-diphosphate. Its function is as follows. Involved in mRNA degradation. Catalyzes the phosphorolysis of single-stranded polyribonucleotides processively in the 3'- to 5'-direction. This chain is Polyribonucleotide nucleotidyltransferase, found in Acinetobacter baylyi (strain ATCC 33305 / BD413 / ADP1).